The primary structure comprises 478 residues: Protein nucleotidyltransferase YdiU (478 aa).

Glycine 84, glycine 86, arginine 87, lysine 107, aspartate 119, glycine 120, arginine 170, and arginine 177 together coordinate ATP. Residue aspartate 246 is the Proton acceptor of the active site. Residues asparagine 247 and aspartate 256 each contribute to the Mg(2+) site. Aspartate 256 serves as a coordination point for ATP.

Belongs to the SELO family. It depends on Mg(2+) as a cofactor. Mn(2+) is required as a cofactor.

It catalyses the reaction L-seryl-[protein] + ATP = 3-O-(5'-adenylyl)-L-seryl-[protein] + diphosphate. The catalysed reaction is L-threonyl-[protein] + ATP = 3-O-(5'-adenylyl)-L-threonyl-[protein] + diphosphate. It carries out the reaction L-tyrosyl-[protein] + ATP = O-(5'-adenylyl)-L-tyrosyl-[protein] + diphosphate. The enzyme catalyses L-histidyl-[protein] + UTP = N(tele)-(5'-uridylyl)-L-histidyl-[protein] + diphosphate. It catalyses the reaction L-seryl-[protein] + UTP = O-(5'-uridylyl)-L-seryl-[protein] + diphosphate. The catalysed reaction is L-tyrosyl-[protein] + UTP = O-(5'-uridylyl)-L-tyrosyl-[protein] + diphosphate. Nucleotidyltransferase involved in the post-translational modification of proteins. It can catalyze the addition of adenosine monophosphate (AMP) or uridine monophosphate (UMP) to a protein, resulting in modifications known as AMPylation and UMPylation. This chain is Protein nucleotidyltransferase YdiU, found in Escherichia coli O127:H6 (strain E2348/69 / EPEC).